A 335-amino-acid chain; its full sequence is Ketol-acid reductoisomerase (NADP(+)) 2 (335 aa).

Residues methionine 1–threonine 180 form the KARI N-terminal Rossmann domain. Residues tyrosine 24–glutamine 27, arginine 47, serine 51, and aspartate 81–glutamine 84 each bind NADP(+). Residue histidine 106 is part of the active site. Glycine 132 lines the NADP(+) pocket. Residues threonine 181–isoleucine 326 enclose the KARI C-terminal knotted domain. Mg(2+) is bound by residues aspartate 189, glutamate 193, glutamate 225, and glutamate 229. Serine 250 contributes to the substrate binding site.

It belongs to the ketol-acid reductoisomerase family. Mg(2+) serves as cofactor.

It carries out the reaction (2R)-2,3-dihydroxy-3-methylbutanoate + NADP(+) = (2S)-2-acetolactate + NADPH + H(+). The enzyme catalyses (2R,3R)-2,3-dihydroxy-3-methylpentanoate + NADP(+) = (S)-2-ethyl-2-hydroxy-3-oxobutanoate + NADPH + H(+). It participates in amino-acid biosynthesis; L-isoleucine biosynthesis; L-isoleucine from 2-oxobutanoate: step 2/4. The protein operates within amino-acid biosynthesis; L-valine biosynthesis; L-valine from pyruvate: step 2/4. Its function is as follows. Involved in the biosynthesis of branched-chain amino acids (BCAA). Catalyzes an alkyl-migration followed by a ketol-acid reduction of (S)-2-acetolactate (S2AL) to yield (R)-2,3-dihydroxy-isovalerate. In the isomerase reaction, S2AL is rearranged via a Mg-dependent methyl migration to produce 3-hydroxy-3-methyl-2-ketobutyrate (HMKB). In the reductase reaction, this 2-ketoacid undergoes a metal-dependent reduction by NADPH to yield (R)-2,3-dihydroxy-isovalerate. In Bacillus cereus (strain ZK / E33L), this protein is Ketol-acid reductoisomerase (NADP(+)) 2.